Consider the following 338-residue polypeptide: Methionyl-tRNA formyltransferase (338 aa).

110–113 (SLLP) provides a ligand contact to (6S)-5,6,7,8-tetrahydrofolate.

This sequence belongs to the Fmt family.

It carries out the reaction L-methionyl-tRNA(fMet) + (6R)-10-formyltetrahydrofolate = N-formyl-L-methionyl-tRNA(fMet) + (6S)-5,6,7,8-tetrahydrofolate + H(+). Attaches a formyl group to the free amino group of methionyl-tRNA(fMet). The formyl group appears to play a dual role in the initiator identity of N-formylmethionyl-tRNA by promoting its recognition by IF2 and preventing the misappropriation of this tRNA by the elongation apparatus. The polypeptide is Methionyl-tRNA formyltransferase (Synechococcus sp. (strain CC9902)).